A 222-amino-acid chain; its full sequence is Cytidylate kinase (222 aa).

11–19 (GPTASGKGT) contacts ATP.

The protein belongs to the cytidylate kinase family. Type 1 subfamily.

Its subcellular location is the cytoplasm. The catalysed reaction is CMP + ATP = CDP + ADP. The enzyme catalyses dCMP + ATP = dCDP + ADP. The polypeptide is Cytidylate kinase (Cupriavidus necator (strain ATCC 17699 / DSM 428 / KCTC 22496 / NCIMB 10442 / H16 / Stanier 337) (Ralstonia eutropha)).